The primary structure comprises 71 residues: Mitochondrial import protein 1 (71 aa).

A helical membrane pass occupies residues 22-44; it reads YAAINLGLPFLNGVMLGFGEIFA.

It belongs to the MIM1 family. As to quaternary structure, component of the mitochondrial outer import machinery (MIM) complex containing at least mim1 and mim2. Interacts with mim2. Interacts with mitophagy receptor atg43.

It localises to the mitochondrion outer membrane. Component of the mitochondrial outer import machinery (MIM) complex that mediates transport of proteins into mitochondrial compartments. Promotes the insertion of tom70 into the outer mitochondrial membrane. Promotes the insertion of atg43 into the outer mitochondrial membrane. The MIM complex cooperates with the receptor tom70 in binding of precursor proteins and promotes their insertion and assembly into the outer membrane. Involved in import of the subset of proteins with multiple alpha-helical transmembrane segments. Required for the assembly of the TOM (translocase of outer membrane) receptor complex, which is responsible for the recognition and translocation of cytosolically synthesized mitochondrial preproteins. The polypeptide is Mitochondrial import protein 1 (Schizosaccharomyces pombe (strain 972 / ATCC 24843) (Fission yeast)).